The primary structure comprises 290 residues: Elongation factor Ts (290 aa).

Positions 82-85 (TDFV) are involved in Mg(2+) ion dislocation from EF-Tu.

The protein belongs to the EF-Ts family.

It localises to the cytoplasm. Its function is as follows. Associates with the EF-Tu.GDP complex and induces the exchange of GDP to GTP. It remains bound to the aminoacyl-tRNA.EF-Tu.GTP complex up to the GTP hydrolysis stage on the ribosome. This is Elongation factor Ts from Thiobacillus denitrificans (strain ATCC 25259 / T1).